The chain runs to 278 residues: MADAPAPAGGRGGFRGGFGGRGRGRGRGRGRGRGRGRGAKDGDKEWVPVTKLGRLVKDMKIKTLEEIYLFSLPIKEFEIIDFFLGDALKDEVLKIMPVQKQTRAGQRTRFKAFVAIGDYNGHVGLGVKCSKEVATAIRGAIILAKLSVVPVRRGYWGNKIGKPHTVPCKVTGKCGSVLVRLIPAPRGTGIVSAPVPKKLLAMAGIDDCYTSARGQTATLGNFAKATYAAIAATYSYLTPDLWRETVFTKSPYQEYTDYLAKHHGRGAVTAHPTEEKPF.

The interval 1–43 (MADAPAPAGGRGGFRGGFGGRGRGRGRGRGRGRGRGRGAKDGD) is disordered. Residues 9–21 (GGRGGFRGGFGGR) are compositionally biased toward gly residues. Basic residues predominate over residues 22 to 37 (GRGRGRGRGRGRGRGR). Positions 88–151 (LKDEVLKIMP…ILAKLSVVPV (64 aa)) constitute an S5 DRBM domain.

It belongs to the universal ribosomal protein uS5 family.

In terms of biological role, component of the ribosome, a large ribonucleoprotein complex responsible for the synthesis of proteins in the cell. The small ribosomal subunit (SSU) binds messenger RNAs (mRNAs) and translates the encoded message by selecting cognate aminoacyl-transfer RNA (tRNA) molecules. The large subunit (LSU) contains the ribosomal catalytic site termed the peptidyl transferase center (PTC), which catalyzes the formation of peptide bonds, thereby polymerizing the amino acids delivered by tRNAs into a polypeptide chain. The nascent polypeptides leave the ribosome through a tunnel in the LSU and interact with protein factors that function in enzymatic processing, targeting, and the membrane insertion of nascent chains at the exit of the ribosomal tunnel. Plays a role in the assembly and function of the 40S ribosomal subunit. Mutations in this protein affects the control of translational fidelity. Involved in nucleolar processing of pre-18S ribosomal RNA and ribosome assembly. This is Small ribosomal subunit protein uS5 (RPS2) from Urechis caupo (Innkeeper worm).